The chain runs to 345 residues: S-adenosylmethionine:tRNA ribosyltransferase-isomerase (345 aa).

Belongs to the QueA family. Monomer.

It is found in the cytoplasm. It catalyses the reaction 7-aminomethyl-7-carbaguanosine(34) in tRNA + S-adenosyl-L-methionine = epoxyqueuosine(34) in tRNA + adenine + L-methionine + 2 H(+). It functions in the pathway tRNA modification; tRNA-queuosine biosynthesis. In terms of biological role, transfers and isomerizes the ribose moiety from AdoMet to the 7-aminomethyl group of 7-deazaguanine (preQ1-tRNA) to give epoxyqueuosine (oQ-tRNA). This is S-adenosylmethionine:tRNA ribosyltransferase-isomerase from Shewanella sp. (strain W3-18-1).